A 232-amino-acid polypeptide reads, in one-letter code: Noggin (232 aa).

The N-terminal stretch at 1 to 27 is a signal peptide; sequence MERCPSLGVTLYALVVVLGLRAAPAGG. The N-linked (GlcNAc...) asparagine glycan is linked to Asn-62. Residues 77–99 form a disordered region; that stretch reads GFMATSPPEDRPGGGGGPAGGAE. Cystine bridges form between Cys-155–Cys-192, Cys-178–Cys-228, Cys-184–Cys-230, and Cys-207–Cys-215.

It belongs to the noggin family. In terms of assembly, homodimer. Interacts with GDF5; inhibits chondrocyte differentiation. As to expression, expressed in condensing cartilage and immature chondrocytes.

The protein resides in the secreted. Its function is as follows. Essential for cartilage morphogenesis and joint formation. Inhibitor of bone morphogenetic proteins (BMP) signaling which is required for growth and patterning of the neural tube and somite. Inhibits chondrocyte differentiation through its interaction with GDF5 and, probably, GDF6. This Mus musculus (Mouse) protein is Noggin (Nog).